Here is a 66-residue protein sequence, read N- to C-terminus: Metallothionein-like protein type 3 (66 aa).

This sequence belongs to the metallothionein superfamily. Type 15 family.

Functionally, metallothioneins have a high content of cysteine residues that bind various heavy metals. The chain is Metallothionein-like protein type 3 (MT2) from Malus domestica (Apple).